The primary structure comprises 298 residues: Tyrosine recombinase XerC (298 aa).

One can recognise a Core-binding (CB) domain in the interval 2–88 (TDLHTDVERY…ALRSFFDWLV (87 aa)). One can recognise a Tyr recombinase domain in the interval 109–288 (HLPKNIDVDD…DFQHLASVYD (180 aa)). Residues Arg-148, Lys-172, His-240, Arg-243, and His-266 contribute to the active site. The active-site O-(3'-phospho-DNA)-tyrosine intermediate is Tyr-275.

It belongs to the 'phage' integrase family. XerC subfamily. As to quaternary structure, forms a cyclic heterotetrameric complex composed of two molecules of XerC and two molecules of XerD, in which XerC interacts with XerD via its C-terminal region, XerD interacts with XerC via its C-terminal region and so on.

It is found in the cytoplasm. With respect to regulation, ftsK may regulate the catalytic switch between XerC and XerD in the heterotetrameric complex during the two steps of the recombination process. Its function is as follows. Site-specific tyrosine recombinase, which acts by catalyzing the cutting and rejoining of the recombining DNA molecules. Binds cooperatively to specific DNA consensus sequences that are separated from XerD binding sites by a short central region, forming the heterotetrameric XerC-XerD complex that recombines DNA substrates. The complex is essential to convert dimers of the bacterial chromosome into monomers to permit their segregation at cell division. It also contributes to the segregational stability of plasmids. In the complex XerC specifically exchanges the top DNA strands. This chain is Tyrosine recombinase XerC, found in Escherichia coli (strain 55989 / EAEC).